A 418-amino-acid chain; its full sequence is D-amino acid dehydrogenase (418 aa).

3-17 is an FAD binding site; that stretch reads VLVLGAGVVGTTSAW.

The protein belongs to the DadA oxidoreductase family. It depends on FAD as a cofactor.

The catalysed reaction is a D-alpha-amino acid + A + H2O = a 2-oxocarboxylate + AH2 + NH4(+). It participates in amino-acid degradation; D-alanine degradation; NH(3) and pyruvate from D-alanine: step 1/1. Oxidative deamination of D-amino acids. This chain is D-amino acid dehydrogenase, found in Dechloromonas aromatica (strain RCB).